Here is a 226-residue protein sequence, read N- to C-terminus: 2,3-bisphosphoglycerate-dependent phosphoglycerate mutase (226 aa).

Substrate-binding positions include 8 to 15 (RHGQSQWN), 21 to 22 (TG), arginine 58, 112 to 115 (ERMY), lysine 123, 139 to 140 (RR), and 183 to 184 (GN). Histidine 9 (tele-phosphohistidine intermediate) is an active-site residue. The active-site Proton donor/acceptor is the glutamate 112.

This sequence belongs to the phosphoglycerate mutase family. BPG-dependent PGAM subfamily.

It carries out the reaction (2R)-2-phosphoglycerate = (2R)-3-phosphoglycerate. Its pathway is carbohydrate degradation; glycolysis; pyruvate from D-glyceraldehyde 3-phosphate: step 3/5. Its function is as follows. Catalyzes the interconversion of 2-phosphoglycerate and 3-phosphoglycerate. This chain is 2,3-bisphosphoglycerate-dependent phosphoglycerate mutase, found in Protochlamydia amoebophila (strain UWE25).